A 524-amino-acid polypeptide reads, in one-letter code: Leukotriene-B4 omega-hydroxylase 3 (524 aa).

Positions 328 and 468 each coordinate heme.

This sequence belongs to the cytochrome P450 family. The cofactor is heme.

It localises to the endoplasmic reticulum membrane. It is found in the microsome membrane. It catalyses the reaction leukotriene B4 + reduced [NADPH--hemoprotein reductase] + O2 = 20-hydroxy-leukotriene B4 + oxidized [NADPH--hemoprotein reductase] + H2O + H(+). The protein operates within lipid metabolism; leukotriene B4 degradation. Cytochromes P450 are a group of heme-thiolate monooxygenases. Catalyzes the omega-hydroxylation of LTB4. This chain is Leukotriene-B4 omega-hydroxylase 3 (Cyp4f14), found in Mus musculus (Mouse).